We begin with the raw amino-acid sequence, 207 residues long: MDPVSVVHSFARSQGLPLNFETVGCEGPSHDPRFVIECKFLDFQHQCTDSSKKRAIQKICVLISNDLKENGLLEEAKTFKPEYKSIAQVYGKFFKRYIAEKESSVITPFKLVNNQILLHDIDELVEYGSSEYMFRHMLLCYIIHKQGIDIKEMCNMKFSPDYIECLSHHLTSTVDIDVHQQDCGNLSVVIFAKDNNIKKQLQIQVSA.

The 68-residue stretch at 2–69 (DPVSVVHSFA…CVLISNDLKE (68 aa)) folds into the DRBM domain.

The protein is Non-structural protein 5 (Segment-12) of Banna virus (BAV).